The following is a 287-amino-acid chain: Elongation factor Ts (287 aa).

The segment at 80 to 83 is involved in Mg(2+) ion dislocation from EF-Tu; it reads TDFL.

Belongs to the EF-Ts family.

It localises to the cytoplasm. Functionally, associates with the EF-Tu.GDP complex and induces the exchange of GDP to GTP. It remains bound to the aminoacyl-tRNA.EF-Tu.GTP complex up to the GTP hydrolysis stage on the ribosome. The protein is Elongation factor Ts of Pseudomonas putida (strain GB-1).